Consider the following 784-residue polypeptide: Toll-like receptor 2 (784 aa).

Positions 1–20 (MPHALWTVWVLGAVISLSKE) are cleaved as a signal peptide. Residues 21–587 (GVPDQPSSLS…THLSVSECHR (567 aa)) are Extracellular-facing. Cys31 and Cys37 are joined by a disulfide. LRR repeat units lie at residues 54 to 77 (AVKSLDLSNNKIASVGNSDLWKCV), 78 to 101 (NLKALRLGSNDINTIEEDSFSSLR), 102 to 125 (SLEHLDLSNNHLSNLSSSWFRPLS), 126 to 150 (SLKFLNLLGSTYKTLGETSLFSHLT), 151 to 175 (NLRILKVGNIHFTEIQGKDFAGLTF), 176 to 199 (LEELEIDATNLQRYEPKSFKSIQN), 200 to 223 (ISHLILRMKQPVLLPEIILDTLSS), 224 to 250 (LEYLELRDTYLNTFHFAEVSDPETNTL), 251 to 278 (IKKFTFRNVKITDESFDEIVKLLNYISG), 279 to 308 (VSEAEFDECTLDGLGEFRTPDIDKIKVIGK), 309 to 337 (LETLTIRRLRIPQFYLFRDLSSIYSLTER), 338 to 361 (VKRITIENSKVFLVPCSLSRHLKS), 362 to 388 (LEYLDLSDNLMVEEYLKNSACERAWPS), 389 to 414 (LQTLILRQNHLTSLGKTGETLLTLKN), 415 to 437 (LTKLDISKNSFHSMPETCQWPEK), 438 to 457 (MKYLNLSSIRIDRLTQCIPQ), 458 to 478 (TLEVLDISNNNLNSFSLILPQ), 479 to 500 (VKELYISRNKLKTLPDASFLPM), and 501 to 524 (LLVMRISRKTINTFSKEQLDSFQK). A glycan (N-linked (GlcNAc...) asparagine) is linked at Asn115. Asn199 is a glycosylation site (N-linked (GlcNAc...) asparagine). The cysteines at positions 353 and 382 are disulfide-linked. Asn414 is a glycosylation site (N-linked (GlcNAc...) asparagine). A disulfide bridge connects residues Cys432 and Cys454. Asn442 is a glycosylation site (N-linked (GlcNAc...) asparagine). Residues 525 to 579 (LKTLEAGGNNFICSCEFLSFTQEEQALDQILIDWPENYLCDSPSHVRGQRVQDTH) form the LRRCT domain. A helical membrane pass occupies residues 588–608 (TALVSAVCCALFLSILLTGVL). At 609-784 (CHHFHGLWYM…WLNLRAAIKS (176 aa)) the chain is on the cytoplasmic side. In terms of domain architecture, TIR spans 639 to 782 (ICYDAFVSYS…GFWLNLRAAI (144 aa)). Residue Lys754 forms a Glycyl lysine isopeptide (Lys-Gly) (interchain with G-Cter in ubiquitin) linkage. The ATG16L1-binding motif motif lies at 761–778 (YLEWPTDEAQQEGFWLNL).

The protein belongs to the Toll-like receptor family. As to quaternary structure, interacts with LY96, TLR1 and TLR6 (via extracellular domain). TLR2 seems to exist in heterodimers with either TLR1 or TLR6 before stimulation by the ligand. The heterodimers form bigger oligomers in response to their corresponding ligands as well as further heterotypic associations with other receptors such as CD14 and/or CD36. Binds MYD88 (via TIR domain). Interacts with TICAM1. Interacts with CNPY3. Interacts with ATG16L1. Interacts with PPP1R11. Interacts with TICAM2. Interacts with TIRAP. Post-translationally, ubiquitinated at Lys-754 by PPP1R11, leading to its degradation. Deubiquitinated by USP2. Glycosylation of Asn-442 is critical for secretion of the N-terminal ectodomain of TLR2.

The protein localises to the membrane. It localises to the cytoplasmic vesicle. The protein resides in the phagosome membrane. Its subcellular location is the membrane raft. Functionally, cooperates with LY96 to mediate the innate immune response to bacterial lipoproteins and other microbial cell wall components. Cooperates with TLR1 or TLR6 to mediate the innate immune response to bacterial lipoproteins or lipopeptides. Acts via MYD88 and TRAF6, leading to NF-kappa-B activation, cytokine secretion and the inflammatory response. May also promote apoptosis in response to lipoproteins. Forms activation clusters composed of several receptors depending on the ligand, these clusters trigger signaling from the cell surface and subsequently are targeted to the Golgi in a lipid-raft dependent pathway. Forms the cluster TLR2:TLR6:CD14:CD36 in response to diacylated lipopeptides and TLR2:TLR1:CD14 in response to triacylated lipopeptides. This chain is Toll-like receptor 2 (TLR2), found in Equus caballus (Horse).